A 278-amino-acid polypeptide reads, in one-letter code: Octanoyltransferase LipM (278 aa).

A BPL/LPL catalytic domain is found at Lys33–Leu248. Cys150 functions as the Acyl-thioester intermediate in the catalytic mechanism.

Belongs to the octanoyltransferase LipM family. In terms of assembly, monomer.

It catalyses the reaction octanoyl-[ACP] + L-lysyl-[protein] = N(6)-octanoyl-L-lysyl-[protein] + holo-[ACP] + H(+). The protein operates within protein modification; protein lipoylation via endogenous pathway; protein N(6)-(lipoyl)lysine from octanoyl-[acyl-carrier-protein]. Catalyzes the transfer of endogenously produced octanoic acid from octanoyl-acyl-carrier-protein onto the lipoyl domain of GcvH, an intermediate carrier during protein lipoylation. The sequence is that of Octanoyltransferase LipM from Bacillus anthracis.